The chain runs to 258 residues: Tryptophan synthase alpha chain (258 aa).

Active-site proton acceptor residues include Glu-47 and Asp-58.

It belongs to the TrpA family. As to quaternary structure, tetramer of two alpha and two beta chains.

It carries out the reaction (1S,2R)-1-C-(indol-3-yl)glycerol 3-phosphate + L-serine = D-glyceraldehyde 3-phosphate + L-tryptophan + H2O. Its pathway is amino-acid biosynthesis; L-tryptophan biosynthesis; L-tryptophan from chorismate: step 5/5. Its function is as follows. The alpha subunit is responsible for the aldol cleavage of indoleglycerol phosphate to indole and glyceraldehyde 3-phosphate. In Bacillus cereus (strain ATCC 14579 / DSM 31 / CCUG 7414 / JCM 2152 / NBRC 15305 / NCIMB 9373 / NCTC 2599 / NRRL B-3711), this protein is Tryptophan synthase alpha chain.